A 283-amino-acid chain; its full sequence is MPTVGVVLNDDKPQALEVARRMADWLSQREVPMGIPLTRVAELVHSPSPELRDRLRQLDLIVVLGGDGTLLNTARLAAPHGIPVVGVNLGRLGFLTEVEVSDLFPALERIIAGDYRIEERMMLEARLIRDGLEQPSYFALNDVVVTKGDHPRMIRVEAAVGDEVVWTYSADGLIVSSPTGSTAYSLSAGGPIVSPELHALLLTPISPHALDARPLVIPQDQAVRLTVISSHSHAVVTVDGQPGQPMVCGDSVLVRKASVACRLIRLGERTFFRILREKMQQGR.

Asp-67 (proton acceptor) is an active-site residue. NAD(+) is bound by residues 67 to 68 (DG), 141 to 142 (ND), Arg-152, Asp-171, 182 to 187 (TAYSLS), and Gln-241.

It belongs to the NAD kinase family. A divalent metal cation serves as cofactor.

Its subcellular location is the cytoplasm. It catalyses the reaction NAD(+) + ATP = ADP + NADP(+) + H(+). In terms of biological role, involved in the regulation of the intracellular balance of NAD and NADP, and is a key enzyme in the biosynthesis of NADP. Catalyzes specifically the phosphorylation on 2'-hydroxyl of the adenosine moiety of NAD to yield NADP. The protein is NAD kinase of Heliobacterium modesticaldum (strain ATCC 51547 / Ice1).